The primary structure comprises 185 residues: Peptidyl-tRNA hydrolase (185 aa).

Tyrosine 14 is a binding site for tRNA. Histidine 19 functions as the Proton acceptor in the catalytic mechanism. Phenylalanine 64, asparagine 66, and asparagine 112 together coordinate tRNA.

It belongs to the PTH family. In terms of assembly, monomer.

It localises to the cytoplasm. It carries out the reaction an N-acyl-L-alpha-aminoacyl-tRNA + H2O = an N-acyl-L-amino acid + a tRNA + H(+). Hydrolyzes ribosome-free peptidyl-tRNAs (with 1 or more amino acids incorporated), which drop off the ribosome during protein synthesis, or as a result of ribosome stalling. Its function is as follows. Catalyzes the release of premature peptidyl moieties from peptidyl-tRNA molecules trapped in stalled 50S ribosomal subunits, and thus maintains levels of free tRNAs and 50S ribosomes. The sequence is that of Peptidyl-tRNA hydrolase from Alkaliphilus oremlandii (strain OhILAs) (Clostridium oremlandii (strain OhILAs)).